Consider the following 177-residue polypeptide: Putative membrane protein 165 (177 aa).

Over 1-7 (MYLVLLI) the chain is Intravirion. The helical transmembrane segment at 8–24 (AVILFIIVILMIFLISG) threads the bilayer. Residues 25-166 (LFYPEQEPAL…DPHPALKSKN (142 aa)) are Virion surface-facing.

It belongs to the asfivirus envelope protein p22 family.

The protein resides in the virion membrane. It localises to the host cell membrane. The protein is Putative membrane protein 165 of African swine fever virus (isolate Pig/Kenya/KEN-50/1950) (ASFV).